Here is a 342-residue protein sequence, read N- to C-terminus: Protein FDO1 (342 aa).

3 disordered regions span residues 1 to 36 (MEENKLSGNKPIQLATWSNQMGSPENNGNNANNGSD), 57 to 76 (MSPMEEEHSQPSSSQETLSV), and 299 to 322 (GRTITHNRPNTKDESIQDSHGNRT). Positions 15–25 (ATWSNQMGSPE) are enriched in polar residues. Basic and acidic residues predominate over residues 308-319 (NTKDESIQDSHG).

Interacts with FKH1.

In concert with FKH1, plays a role in directionality of mating type switching by controlling which donor mating-type locus is inserted into MAT locus during mating type switching. This chain is Protein FDO1, found in Saccharomyces cerevisiae (strain ATCC 204508 / S288c) (Baker's yeast).